Reading from the N-terminus, the 317-residue chain is Transaldolase (317 aa).

The Schiff-base intermediate with substrate role is filled by Lys-126.

The protein belongs to the transaldolase family. Type 1 subfamily. As to quaternary structure, homodimer.

The protein localises to the cytoplasm. It carries out the reaction D-sedoheptulose 7-phosphate + D-glyceraldehyde 3-phosphate = D-erythrose 4-phosphate + beta-D-fructose 6-phosphate. Its pathway is carbohydrate degradation; pentose phosphate pathway; D-glyceraldehyde 3-phosphate and beta-D-fructose 6-phosphate from D-ribose 5-phosphate and D-xylulose 5-phosphate (non-oxidative stage): step 2/3. Functionally, transaldolase is important for the balance of metabolites in the pentose-phosphate pathway. The polypeptide is Transaldolase (Burkholderia ambifaria (strain ATCC BAA-244 / DSM 16087 / CCUG 44356 / LMG 19182 / AMMD) (Burkholderia cepacia (strain AMMD))).